The primary structure comprises 85 residues: UPF0181 protein YE1782 (85 aa).

Disordered stretches follow at residues 1-22 (MLAG…RIHQ) and 57-85 (DTDF…PYEG). Basic and acidic residues predominate over residues 9–21 (SHEEQQEAVERIH). Positions 74-85 (QDADEIEDPYEG) are enriched in acidic residues.

This sequence belongs to the UPF0181 family.

The sequence is that of UPF0181 protein YE1782 from Yersinia enterocolitica serotype O:8 / biotype 1B (strain NCTC 13174 / 8081).